A 957-amino-acid polypeptide reads, in one-letter code: SH3 domain-binding protein 4-A (957 aa).

Positions 54-113 (ENVKEVVAIKDYCPNNFTTLKFSKGEHLYVLDASGGDWWYAHNSTEMGYIPSSYVQPLNY) constitute an SH3 1 domain. Residues 312 to 449 (TSIVCRLDSS…LEPVMYVVMV (138 aa)) enclose the ZU5 domain. Residues 649 to 719 (TSLKYGKLLK…HAKNVLVVGK (71 aa)) form the SH3 2 domain.

As to quaternary structure, homodimer or homooligomer.

The protein localises to the membrane. It localises to the clathrin-coated pit. It is found in the cytoplasmic vesicle. The protein resides in the clathrin-coated vesicle. Its subcellular location is the nucleus. Possible role in regulating endocytosis of the transferrin receptor at the plasma membrane. Alternatively, may function as a negative regulator of the amino acid-induced TOR signaling by inhibiting the formation of active Rag GTPase complexes. Preferentially binds inactive Rag GTPase complexes and prevents their interaction with the mTORC1 complex inhibiting its relocalization to lysosomes and its activation. Thereby, may indirectly regulate cell growth, proliferation and autophagy. The sequence is that of SH3 domain-binding protein 4-A (sh3bp4-a) from Xenopus laevis (African clawed frog).